Reading from the N-terminus, the 333-residue chain is Adenosine deaminase (333 aa).

Residues H12 and H14 each coordinate Zn(2+). Substrate contacts are provided by H14, D16, and G170. H197 provides a ligand contact to Zn(2+). E200 acts as the Proton donor in catalysis. D278 provides a ligand contact to Zn(2+). D279 lines the substrate pocket.

This sequence belongs to the metallo-dependent hydrolases superfamily. Adenosine and AMP deaminases family. Adenosine deaminase subfamily. Zn(2+) is required as a cofactor.

It catalyses the reaction adenosine + H2O + H(+) = inosine + NH4(+). The enzyme catalyses 2'-deoxyadenosine + H2O + H(+) = 2'-deoxyinosine + NH4(+). Functionally, catalyzes the hydrolytic deamination of adenosine and 2-deoxyadenosine. The polypeptide is Adenosine deaminase (Shigella boydii serotype 4 (strain Sb227)).